The primary structure comprises 604 residues: MYMLRPSSLLLATGLLNQGSSVLAAVISRASNQTFDYVIVGGGTAGLVLANRLTEDSSVTVAVVEAGTFPEDVVGNVTQVPAYAPQFEGAELDLEWNFTTTPQAGLGNIPVSYYRAKALGGCSDINFMAYGRTSKGAHQLWADLVGDDSYTYDNMVKYYKKTMNFSPPNAETRLANATPMYDTVDTSTGGGIDVTFPSFAQSWSTWVSKGLAAIGLPQAHSFVDGNLLGHSWQMVGITQSTGIRSSAQAGYLRPVMSRPNLTILNGTFAERIIFNGDAASGVEVTAKGQTYTLTSKKELILSAGVFQSPQLLMVSGVGPKALLDKFNIPVVKDLPGVGQNMVDHITVPLSYQVDVVTSSTLAGSSLEEAITEWNTHGTGPLSNNGGDYIGMEKAPAEFRANFSAETVKQLSALPEDWPELQYNVLPATVSSTSIGGEGSVLGGNYGSMLASVIAPQSRGNVSIASASMSDAPLINPNIFTAQADIDLLLTAFKRVRQALQSSAMAPIMIGDEFFPGPTVQTDEQILDYLTETVRPFSHGFATCKMGKSSDPDAVIDSHGKVYGIKNLRVVDASSFPFLPPGPAPQIQVYTLAEKLADDIKQTKY.

The signal sequence occupies residues Met1–Ala24. Asn32 carries N-linked (GlcNAc...) asparagine glycosylation. FAD contacts are provided by residues Thr44–Ala45 and Glu65–Ala66. Residues Asn76 and Asn97 are each glycosylated (N-linked (GlcNAc...) asparagine). Residue Asn126–Ala129 participates in FAD binding. N-linked (GlcNAc...) asparagine glycans are attached at residues Asn260, Asn265, Asn401, and Asn460. Catalysis depends on His538, which acts as the Proton acceptor. Residues Ala572 and Pro584–Gln585 each bind FAD.

It belongs to the GMC oxidoreductase family. In terms of assembly, homodimer. Requires FAD as cofactor.

In terms of biological role, oxidoreductase; part of the gene cluster that mediates the biosynthesis of the phthalide-terpenoid hybrid 11'-O-desmethylfendlerol. MfmG seems not to be involved directly in the biosynthesis of 11'-O-desmethylfendlerol and its role has still to be determined. The biosynthesis of 11'-O-desmethylfendlerol begins with the NR-PKS mfmB that forms 3,5-dimethylorsellinic acid (DMOA), which is then transformed into the phthalide 5,7-dihydroxy-4-(hydroxymethyl)-6-methylphthalide by the cytochrome P450 monooxygenase mfmA and the hydrolase mfmC. Subsequently, the methyltransferase mfmE catalyzes 7-O-methylation to yield 5-hydroxy-4-(hydroxymethyl)-7-methoxy-6-methylphthalide, which undergoes C-3 hydroxylation by the cytochrome P450 monooxygenase mfmF. The resultant cyclopolic acid (2,5-dihydroxy-4-(hydroxymethyl)-7-methoxy-6-methylphthalide) is then farnesylated by the DMATS-type prenyltransferase mfmD to afford 5-O-farnesylcyclopolic acid. Finally, the Pyr4-family terpene cyclase mfmH cyclizes the farnesyl moiety of 5-O-farnesylcyclopolic acid into a drimane-like structure, thus completing the biosynthesis of 11'-O-desmethylfendlerol. In Annulohypoxylon moriforme (Filamentous fungus), this protein is Glucose-methanol-choline family oxidoreductase mfmG.